Reading from the N-terminus, the 1102-residue chain is DNA-directed RNA polymerase subunit beta (1102 aa).

The disordered stretch occupies residues 1076–1102 (IDSQRRAPNRPTYESLHTEEDLEEEEV).

It belongs to the RNA polymerase beta chain family. As to quaternary structure, in cyanobacteria the RNAP catalytic core is composed of 2 alpha, 1 beta, 1 beta', 1 gamma and 1 omega subunit. When a sigma factor is associated with the core the holoenzyme is formed, which can initiate transcription.

It carries out the reaction RNA(n) + a ribonucleoside 5'-triphosphate = RNA(n+1) + diphosphate. In terms of biological role, DNA-dependent RNA polymerase catalyzes the transcription of DNA into RNA using the four ribonucleoside triphosphates as substrates. The protein is DNA-directed RNA polymerase subunit beta of Synechocystis sp. (strain ATCC 27184 / PCC 6803 / Kazusa).